Reading from the N-terminus, the 212-residue chain is Ribosomal RNA large subunit methyltransferase E (212 aa).

Positions 1-26 are disordered; that stretch reads MPAERPSVSQKPKNPYKRPDAFTKAA. S-adenosyl-L-methionine-binding residues include glycine 63, tryptophan 65, aspartate 83, aspartate 101, and aspartate 122. Residue lysine 162 is the Proton acceptor of the active site.

The protein belongs to the class I-like SAM-binding methyltransferase superfamily. RNA methyltransferase RlmE family.

The protein resides in the cytoplasm. The enzyme catalyses uridine(2552) in 23S rRNA + S-adenosyl-L-methionine = 2'-O-methyluridine(2552) in 23S rRNA + S-adenosyl-L-homocysteine + H(+). In terms of biological role, specifically methylates the uridine in position 2552 of 23S rRNA at the 2'-O position of the ribose in the fully assembled 50S ribosomal subunit. The sequence is that of Ribosomal RNA large subunit methyltransferase E from Sorangium cellulosum (strain So ce56) (Polyangium cellulosum (strain So ce56)).